Reading from the N-terminus, the 607-residue chain is Methylmalonate-semialdehyde dehydrogenase [acylating], mitochondrial (607 aa).

The segment at 1 to 69 is disordered; it reads MVRVKQKNLE…KLRSSSSTTT (69 aa). The transit peptide at 1–98 directs the protein to the mitochondrion; the sequence is MVRVKQKNLE…QFLALRSSWL (98 aa). A compositionally biased stretch (polar residues) spans 9 to 30; the sequence is LESYRSNGTYPPTWRNPTTSFA. A compositionally biased stretch (basic residues) spans 42–51; sequence LKSKTKRRRL. NAD(+) contacts are provided by Phe259, Lys283, Glu286, Lys287, and Ser336. Cys391 acts as the Nucleophile in catalysis. NAD(+) is bound at residue Glu491.

This sequence belongs to the aldehyde dehydrogenase family.

It is found in the mitochondrion. The catalysed reaction is 2-methyl-3-oxopropanoate + NAD(+) + CoA + H2O = propanoyl-CoA + hydrogencarbonate + NADH + H(+). The sequence is that of Methylmalonate-semialdehyde dehydrogenase [acylating], mitochondrial (ALDH6B2) from Arabidopsis thaliana (Mouse-ear cress).